A 316-amino-acid polypeptide reads, in one-letter code: PAK4-inhibitor inka1 (316 aa).

Residues 108–130 (YSEVSGSSLRGEEDDIVEEESET) form a disordered region. Acidic residues predominate over residues 119 to 128 (EEDDIVEEES). 2 inka box regions span residues 182 to 219 (DSQD…DLPE) and 289 to 316 (SDIA…AGFL).

The protein belongs to the INKA family. In terms of assembly, interacts with pak4/pak5.

The protein localises to the nucleus. Its subcellular location is the cytoplasm. In terms of biological role, inhibitor of the serine/threonine-protein kinase pak4/pak5. Acts by binding pak4/pak5 in a substrate-like manner, inhibiting the protein kinase activity. Required for the proper migration of neural crest cells during embryonic development, probably by inhibiting pak4/pak5. This is PAK4-inhibitor inka1 from Xenopus laevis (African clawed frog).